Consider the following 487-residue polypeptide: Glutamate--tRNA ligase (487 aa).

The short motif at 12-22 is the 'HIGH' region element; it reads PSPTGYMHVGN. The 'KMSKS' region motif lies at 249 to 253; that stretch reads KLSKR. Lys-252 is a binding site for ATP.

The protein belongs to the class-I aminoacyl-tRNA synthetase family. Glutamate--tRNA ligase type 1 subfamily. As to quaternary structure, monomer.

It localises to the cytoplasm. It catalyses the reaction tRNA(Glu) + L-glutamate + ATP = L-glutamyl-tRNA(Glu) + AMP + diphosphate. Functionally, catalyzes the attachment of glutamate to tRNA(Glu) in a two-step reaction: glutamate is first activated by ATP to form Glu-AMP and then transferred to the acceptor end of tRNA(Glu). The protein is Glutamate--tRNA ligase of Clostridium novyi (strain NT).